Reading from the N-terminus, the 354-residue chain is Guanine nucleotide-binding protein G(t) subunit alpha-3 (354 aa).

Residues 1–27 (MGSGISSESKESAKRSKELEKKLQEDA) are disordered. The N-myristoyl glycine moiety is linked to residue G2. The segment covering 8 to 27 (ESKESAKRSKELEKKLQEDA) has biased composition (basic and acidic residues). In terms of domain architecture, G-alpha spans 32–354 (RTVKLLLLGA…KENLKDCGLF (323 aa)). The tract at residues 35–48 (KLLLLGAGESGKST) is G1 motif. Residues 40–47 (GAGESGKS), 175–181 (LHSRVKT), 200–204 (DVGGQ), 269–272 (NKKD), and A326 contribute to the GTP site. Positions 47 and 181 each coordinate Mg(2+). Residues 173–181 (DVLHSRVKT) are G2 motif. Positions 196–205 (FRMFDVGGQR) are G3 motif. A G4 motif region spans residues 265–272 (VLFLNKKD). Residues 324 to 329 (TCATDT) are G5 motif.

This sequence belongs to the G-alpha family. G(i/o/t/z) subfamily. As to quaternary structure, g proteins are composed of 3 units; alpha, beta and gamma, respectively GNAT3, GNB1 and GNG13 for Gustducin heterotrimer for bitter taste transduction. The alpha chain contains the guanine nucleotide binding site. Component of the TAS2R14-GNAT3 complex, consisting of TAS2R14, GNAT3, GNB1 and GNG2; within the complex interacts with TAS2R14; this complex plays a role in the perception of bitterness. Gustducin heterotrimer may also be composed of GNAT3, GNB3 and GNG13. In terms of processing, potential N-myristoylation may anchor alpha-subunit to the inner surface of plasma membrane. As to expression, expressed in taste buds (sensory organs of clustered epithelial cells) of the circumvallate and foliate papillae of the tongue at protein level. Expressed in enteroendocrine L cells of the gut. Detected also in spermatozoa.

The protein localises to the cytoplasm. Functionally, guanine nucleotide-binding protein (G protein) alpha subunit playing a prominent role in bitter and sweet taste transduction as well as in umami (monosodium glutamate, monopotassium glutamate, and inosine monophosphate) taste transduction. Transduction by this alpha subunit involves coupling of specific cell-surface receptors with a cGMP-phosphodiesterase; Activation of phosphodiesterase lowers intracellular levels of cAMP and cGMP which may open a cyclic nucleotide-suppressible cation channel leading to influx of calcium, ultimately leading to release of neurotransmitter. Indeed, denatonium and strychnine induce transient reduction in cAMP and cGMP in taste tissue, whereas this decrease is inhibited by GNAT3 antibody. Gustducin heterotrimer transduces response to bitter and sweet compounds via regulation of phosphodiesterase for alpha subunit, as well as via activation of phospholipase C for beta and gamma subunits, with ultimate increase inositol trisphosphate and increase of intracellular Calcium. GNAT3 can functionally couple to taste receptors to transmit intracellular signal: receptor heterodimer TAS1R2/TAS1R3 senses sweetness and TAS1R1/TAS1R3 transduces umami taste, whereas the T2R family GPCRs such as TAS2R14 act as bitter sensors. Also functions as lumenal sugar sensors in the gut to control the expression of the Na+-glucose transporter SGLT1 in response to dietaty sugar, as well as the secretion of Glucagon-like peptide-1, GLP-1 and glucose-dependent insulinotropic polypeptide, GIP. Thus, may modulate the gut capacity to absorb sugars, with implications in malabsorption syndromes and diet-related disorders including diabetes and obesity. This is Guanine nucleotide-binding protein G(t) subunit alpha-3 (GNAT3) from Homo sapiens (Human).